Here is a 316-residue protein sequence, read N- to C-terminus: Pantothenate kinase (316 aa).

95–102 is an ATP binding site; sequence GSVAVGKS.

Belongs to the prokaryotic pantothenate kinase family.

The protein resides in the cytoplasm. It carries out the reaction (R)-pantothenate + ATP = (R)-4'-phosphopantothenate + ADP + H(+). It participates in cofactor biosynthesis; coenzyme A biosynthesis; CoA from (R)-pantothenate: step 1/5. The polypeptide is Pantothenate kinase (Shewanella loihica (strain ATCC BAA-1088 / PV-4)).